The chain runs to 338 residues: Biotin synthase (338 aa).

The region spanning Asn-63–Arg-290 is the Radical SAM core domain. [4Fe-4S] cluster is bound by residues Cys-78, Cys-82, and Cys-85. Residues Cys-122, Cys-153, Cys-213, and Arg-285 each coordinate [2Fe-2S] cluster.

It belongs to the radical SAM superfamily. Biotin synthase family. In terms of assembly, homodimer. The cofactor is [4Fe-4S] cluster. [2Fe-2S] cluster serves as cofactor.

The enzyme catalyses (4R,5S)-dethiobiotin + (sulfur carrier)-SH + 2 reduced [2Fe-2S]-[ferredoxin] + 2 S-adenosyl-L-methionine = (sulfur carrier)-H + biotin + 2 5'-deoxyadenosine + 2 L-methionine + 2 oxidized [2Fe-2S]-[ferredoxin]. It participates in cofactor biosynthesis; biotin biosynthesis; biotin from 7,8-diaminononanoate: step 2/2. Catalyzes the conversion of dethiobiotin (DTB) to biotin by the insertion of a sulfur atom into dethiobiotin via a radical-based mechanism. The chain is Biotin synthase from Nitrosomonas eutropha (strain DSM 101675 / C91 / Nm57).